The sequence spans 164 residues: Peptidyl-prolyl cis-trans isomerase A (164 aa).

Residue methionine 1 is modified to N-acetylmethionine. Valine 2 is modified (N-acetylvaline; in Peptidyl-prolyl cis-trans isomerase A, N-terminally processed). One can recognise a PPIase cyclophilin-type domain in the interval 7–163 (FFDIAVDGEP…KKITIADCGQ (157 aa)). At lysine 28 the chain carries N6-acetyllysine; alternate. A Glycyl lysine isopeptide (Lys-Gly) (interchain with G-Cter in SUMO2); alternate cross-link involves residue lysine 28. Lysine 28 is covalently cross-linked (Glycyl lysine isopeptide (Lys-Gly) (interchain with G-Cter in ubiquitin); alternate). N6-acetyllysine is present on residues lysine 44 and lysine 76. Cysteine 62 and cysteine 161 are oxidised to a cystine. The residue at position 77 (serine 77) is a Phosphoserine. N6-acetyllysine; alternate is present on lysine 82. A Glycyl lysine isopeptide (Lys-Gly) (interchain with G-Cter in SUMO2); alternate cross-link involves residue lysine 82. Threonine 93 is modified (phosphothreonine). N-linked (GlcNAc...) asparagine glycosylation is present at asparagine 108. 3 positions are modified to N6-acetyllysine: lysine 125, lysine 131, and lysine 133.

It belongs to the cyclophilin-type PPIase family. PPIase A subfamily. As to quaternary structure, interacts with protein phosphatase PPP3CA/calcineurin A. Interacts with isoform 2 of BSG/CD147. Interacts with FOXO1; the interaction promotes FOXO1 dephosphorylation, nuclear accumulation and transcriptional activity. Interacts with integrin ITGA2B:ITGB3; the interaction is ROS and peptidyl-prolyl cis-trans isomerase (PPIase) activity-dependent and is increased in the presence of thrombin. Interacts with MAP3K5. Interacts with TARDBP; the interaction is dependent on the RNA-binding activity of TARDBP and the PPIase activity of PPIA/CYPA and the acetylation of PPIA/CYPA at Lys-125 favors the interaction. Interacts with HNRNPA1, HNRNPA2B1, HNRNPC, RBMX, HNRNPK and HNRNPM. Post-translationally, acetylation at Lys-125 markedly inhibits catalysis of cis to trans isomerization. PPIA acetylation also antagonizes the immunosuppressive effects of cyclosporine by inhibiting the sequential steps of cyclosporine binding and calcineurin inhibition. Acetylation at Lys-125 favors the interaction with TARDBP.

It is found in the cytoplasm. Its subcellular location is the secreted. The protein localises to the nucleus. It catalyses the reaction [protein]-peptidylproline (omega=180) = [protein]-peptidylproline (omega=0). Binds cyclosporin A (CsA). CsA mediates some of its effects via an inhibitory action on PPIase. In terms of biological role, catalyzes the cis-trans isomerization of proline imidic peptide bonds in oligopeptides. Exerts a strong chemotactic effect on leukocytes partly through activation of one of its membrane receptors BSG/CD147, initiating a signaling cascade that culminates in MAPK/ERK activation. Activates endothelial cells (ECs) in a proinflammatory manner by stimulating activation of NF-kappa-B and ERK, JNK and p38 MAP-kinases and by inducing expression of adhesion molecules including SELE and VCAM1. Induces apoptosis in ECs by promoting the FOXO1-dependent expression of CCL2 and BCL2L11 which are involved in EC chemotaxis and apoptosis. In response to oxidative stress, initiates proapoptotic and antiapoptotic signaling in ECs via activation of NF-kappa-B and AKT1 and up-regulation of antiapoptotic protein BCL2. Negatively regulates MAP3K5/ASK1 kinase activity, autophosphorylation and oxidative stress-induced apoptosis mediated by MAP3K5/ASK1. Necessary for the assembly of TARDBP in heterogeneous nuclear ribonucleoprotein (hnRNP) complexes and regulates TARDBP binding to RNA UG repeats and TARDBP-dependent expression of HDAC6, ATG7 and VCP which are involved in clearance of protein aggregates. Plays an important role in platelet activation and aggregation. Regulates calcium mobilization and integrin ITGA2B:ITGB3 bidirectional signaling via increased ROS production as well as by facilitating the interaction between integrin and the cell cytoskeleton. Binds heparan sulfate glycosaminoglycans. The polypeptide is Peptidyl-prolyl cis-trans isomerase A (PPIA) (Bos taurus (Bovine)).